The chain runs to 257 residues: E3 ubiquitin-protein ligase RNF170 (257 aa).

At 1–24 (MADNQEGRPYFPLDEGSIIEGVSD) the chain is on the lumenal side. The helical transmembrane segment at 25 to 45 (QVIVVVLLSFVAVGSLLYLLL) threads the bilayer. Residues 46–200 (RNDEQNIHPE…GGLFWMFRIR (155 aa)) lie on the Cytoplasmic side of the membrane. The RING-type zinc-finger motif lies at 87–130 (CPVCLQQATFPVETNCGHLFCGSCIIAYWRYGSWLGAINCPICR). The helical transmembrane segment at 201-221 (IVLCLLGALFYLVSPLDIIPE) threads the bilayer. Residue alanine 222 is a topological domain, lumenal. The helical transmembrane segment at 223-243 (VFGLLGFLDDFFVLFLLLIYI) threads the bilayer. Topologically, residues 244–257 (SIMYREVVTQRLYR) are cytoplasmic.

The protein localises to the endoplasmic reticulum membrane. It catalyses the reaction S-ubiquitinyl-[E2 ubiquitin-conjugating enzyme]-L-cysteine + [acceptor protein]-L-lysine = [E2 ubiquitin-conjugating enzyme]-L-cysteine + N(6)-ubiquitinyl-[acceptor protein]-L-lysine.. The protein operates within protein modification; protein ubiquitination. Functionally, E3 ubiquitin-protein ligase that plays an essential role in stimulus-induced inositol 1,4,5-trisphosphate receptor (ITPR) ubiquitination and degradation via the endoplasmic reticulum-associated degradation (ERAD) pathway. Also involved in ITPR turnover in resting cells. The polypeptide is E3 ubiquitin-protein ligase RNF170 (rnf170) (Xenopus tropicalis (Western clawed frog)).